A 184-amino-acid chain; its full sequence is Large ribosomal subunit protein uL6 (184 aa).

Belongs to the universal ribosomal protein uL6 family. Part of the 50S ribosomal subunit.

Its function is as follows. This protein binds to the 23S rRNA, and is important in its secondary structure. It is located near the subunit interface in the base of the L7/L12 stalk, and near the tRNA binding site of the peptidyltransferase center. The chain is Large ribosomal subunit protein uL6 from Desulfurococcus amylolyticus (strain DSM 18924 / JCM 16383 / VKM B-2413 / 1221n) (Desulfurococcus kamchatkensis).